A 1365-amino-acid polypeptide reads, in one-letter code: Histone-lysine N-methyltransferase NSD2 (1365 aa).

A phosphothreonine mark is found at threonine 110 and threonine 114. Residue serine 121 is modified to Phosphoserine. Residues 149–170 (ADVSQSEENGQKPENKARRNRK) form a disordered region. Residue serine 172 is modified to Phosphoserine. Positions 222-286 (VGDLVWSKVS…FEKSLVAFEG (65 aa)) constitute a PWWP 1 domain. The residue at position 376 (serine 376) is a Phosphoserine. 2 disordered regions span residues 376–455 (SSGV…RKGD) and 516–658 (EDSG…SKKS). Phosphothreonine is present on threonine 422. Residues 453 to 521 (KGDAASQFLV…VQAEEDSGNV (69 aa)) constitute a DNA-binding region (HMG box). Residue threonine 544 is modified to Phosphothreonine. A compositionally biased stretch (basic and acidic residues) spans 552–567 (DKHSLRKRDTITDKTA). The segment covering 580-590 (SLKSQAATKNL) has biased composition (polar residues). Over residues 606-622 (AASSALGFSKSSSPSAS) the composition is skewed to low complexity. Serine 614 bears the Phosphoserine mark. The span at 632–648 (PGDEPSESPYESADETQ) shows a compositional bias: acidic residues. 3 consecutive PHD-type zinc fingers follow at residues 667-713 (EYVC…CASG), 714-770 (IHSC…CHAS), and 831-875 (VSWC…CRAG). Residues 880–942 (FQDIIWVKLG…QARVFPYMEG (63 aa)) form the PWWP 2 domain. Positions 1011 to 1061 (SEIPKCNCKPTDENPCGFDSECLNRMLMFECHPQVCPAGEFCQNQCFTKRQ) constitute an AWS domain. Cysteine 1016, cysteine 1018, cysteine 1026, cysteine 1032, cysteine 1041, cysteine 1046, and cysteine 1052 together coordinate Zn(2+). Residues 1063–1180 (PETKIIKTDG…AGTELTFNYN (118 aa)) enclose the SET domain. S-adenosyl-L-methionine-binding positions include tryptophan 1075, 1115–1118 (THFY), and 1141–1142 (NH). Residue cysteine 1144 coordinates Zn(2+). Asparagine 1186 provides a ligand contact to S-adenosyl-L-methionine. The Post-SET domain maps to 1187–1203 (EKTVCRCGASNCSGFLG). Cysteine 1191 contacts Zn(2+). Arginine 1192 provides a ligand contact to S-adenosyl-L-methionine. Zn(2+) contacts are provided by cysteine 1193 and cysteine 1198. The interval 1207 to 1232 (KTSTTLSSEEKGKKTKKKTRRRRAKG) is disordered. Positions 1219–1230 (KKTKKKTRRRRA) are enriched in basic residues. The segment at 1239–1286 (EDECFRCGDGGQLVLCDRKFCTKAYHLSCLGLGKRPFGKWECPWHHCD) adopts a PHD-type 4; atypical zinc-finger fold. Positions 1333-1365 (VRSTKTEKPPPEPGKPKGKRRRRRGWRRVTEGK) are disordered. Residues 1348–1359 (PKGKRRRRRGWR) are compositionally biased toward basic residues.

Belongs to the class V-like SAM-binding methyltransferase superfamily. Histone-lysine methyltransferase family. SET2 subfamily. In terms of assembly, interacts with HDAC1. Interacts (via PHD-type zinc fingers 1, 2 and 3) with SALL1. Interacts (via PHD-type 1, 2 and 3) with SALL4. Interacts with NANOG. Interacts with OGT. Interacts (via HMG box) with NKX2-5. Widely expressed. Predominantly expressed in thymus and testis.

The protein localises to the nucleus. Its subcellular location is the chromosome. It is found in the cytoplasm. It localises to the nucleolus. It catalyses the reaction L-lysyl(36)-[histone H3] + S-adenosyl-L-methionine = N(6)-methyl-L-lysyl(36)-[histone H3] + S-adenosyl-L-homocysteine + H(+). The catalysed reaction is L-lysyl(36)-[histone H3] + 2 S-adenosyl-L-methionine = N(6),N(6)-dimethyl-L-lysyl(36)-[histone H3] + 2 S-adenosyl-L-homocysteine + 2 H(+). In terms of biological role, histone methyltransferase which specifically dimethylates nucleosomal histone H3 at 'Lys-36' (H3K36me2). Also monomethylates nucleosomal histone H3 at 'Lys-36' (H3K36me) in vitro. Does not trimethylate nucleosomal histone H3 at 'Lys-36' (H3K36me3). However, specifically trimethylates histone H3 at 'Lys-36' (H3K36me3) at euchromatic regions in embryonic stem (ES) cells. By methylating histone H3 at 'Lys-36', involved in the regulation of gene transcription during various biological processes. In ES cells, associates with developmental transcription factors such as SALL1 and represses inappropriate gene transcription mediated by histone deacetylation. During heart development, associates with transcription factor NKX2-5 to repress transcription of NKX2-5 target genes. Plays an essential role in adipogenesis, by regulating expression of genes involved in pre-adipocyte differentiation. During T-cell receptor (TCR) and CD28-mediated T-cell activation, promotes the transcription of transcription factor BCL6 which is required for follicular helper T (Tfh) cell differentiation. During B-cell development, required for the generation of the B1 lineage. During B2 cell activation, may contribute to the control of isotype class switch recombination (CRS), splenic germinal center formation, and the humoral immune response. Plays a role in class switch recombination of the immunoglobulin heavy chain (IgH) locus during B-cell activation. By regulating the methylation of histone H3 at 'Lys-36' and histone H4 at 'Lys-20' at the IgH locus, involved in TP53BP1 recruitment to the IgH switch region and promotes the transcription of IgA. Functionally, histone methyltransferase which specifically dimethylates nucleosomal histone H3 at 'Lys-36' (H3K36me2). Histone methyltransferase which specifically dimethylates nucleosomal histone H3 at 'Lys-36' (H3K36me2). Methylation of histone H3 at 'Lys-27' is controversial. Mono-, di- or tri-methylates histone H3 at 'Lys-27' (H3K27me, H3K27me2 and H3K27me3). Does not methylate histone H3 at 'Lys-27'. May act as a transcription regulator that binds DNA and suppresses IL5 transcription through HDAC recruitment. The chain is Histone-lysine N-methyltransferase NSD2 from Homo sapiens (Human).